A 261-amino-acid polypeptide reads, in one-letter code: Cytochrome c oxidase subunit 3 (261 aa).

Transmembrane regions (helical) follow at residues 31–51 (LVLW…LLLI), 82–102 (PMIL…WAFF), 126–146 (PFLV…TITW), 159–179 (AIQA…LQAW), 197–217 (FFVA…FLLV), and 239–259 (AWYW…IYWW).

This sequence belongs to the cytochrome c oxidase subunit 3 family. Component of the cytochrome c oxidase (complex IV, CIV), a multisubunit enzyme composed of a catalytic core of 3 subunits and several supernumerary subunits. The complex exists as a monomer or a dimer and forms supercomplexes (SCs) in the inner mitochondrial membrane with ubiquinol-cytochrome c oxidoreductase (cytochrome b-c1 complex, complex III, CIII).

The protein localises to the mitochondrion inner membrane. It carries out the reaction 4 Fe(II)-[cytochrome c] + O2 + 8 H(+)(in) = 4 Fe(III)-[cytochrome c] + 2 H2O + 4 H(+)(out). Its function is as follows. Component of the cytochrome c oxidase, the last enzyme in the mitochondrial electron transport chain which drives oxidative phosphorylation. The respiratory chain contains 3 multisubunit complexes succinate dehydrogenase (complex II, CII), ubiquinol-cytochrome c oxidoreductase (cytochrome b-c1 complex, complex III, CIII) and cytochrome c oxidase (complex IV, CIV), that cooperate to transfer electrons derived from NADH and succinate to molecular oxygen, creating an electrochemical gradient over the inner membrane that drives transmembrane transport and the ATP synthase. Cytochrome c oxidase is the component of the respiratory chain that catalyzes the reduction of oxygen to water. Electrons originating from reduced cytochrome c in the intermembrane space (IMS) are transferred via the dinuclear copper A center (CU(A)) of subunit 2 and heme A of subunit 1 to the active site in subunit 1, a binuclear center (BNC) formed by heme A3 and copper B (CU(B)). The BNC reduces molecular oxygen to 2 water molecules using 4 electrons from cytochrome c in the IMS and 4 protons from the mitochondrial matrix. The protein is Cytochrome c oxidase subunit 3 (COIII) of Paracentrotus lividus (Common sea urchin).